A 500-amino-acid polypeptide reads, in one-letter code: Glutamyl-tRNA(Gln) amidotransferase subunit A (500 aa).

Catalysis depends on charge relay system residues Lys93 and Ser168. The Acyl-ester intermediate role is filled by Ser192.

The protein belongs to the amidase family. GatA subfamily. In terms of assembly, heterotrimer of A, B and C subunits.

The enzyme catalyses L-glutamyl-tRNA(Gln) + L-glutamine + ATP + H2O = L-glutaminyl-tRNA(Gln) + L-glutamate + ADP + phosphate + H(+). Its function is as follows. Allows the formation of correctly charged Gln-tRNA(Gln) through the transamidation of misacylated Glu-tRNA(Gln) in organisms which lack glutaminyl-tRNA synthetase. The reaction takes place in the presence of glutamine and ATP through an activated gamma-phospho-Glu-tRNA(Gln). The chain is Glutamyl-tRNA(Gln) amidotransferase subunit A from Corynebacterium jeikeium (strain K411).